The primary structure comprises 324 residues: Quinolinate synthase (324 aa).

Positions 39 and 56 each coordinate iminosuccinate. Cys-101 lines the [4Fe-4S] cluster pocket. Iminosuccinate is bound by residues 127-129 and Ser-144; that span reads YIN. Cys-187 serves as a coordination point for [4Fe-4S] cluster. Iminosuccinate-binding positions include 213–215 and Thr-230; that span reads HPE. Cys-280 contributes to the [4Fe-4S] cluster binding site.

The protein belongs to the quinolinate synthase family. Type 2 subfamily. Requires [4Fe-4S] cluster as cofactor.

The protein localises to the cytoplasm. It catalyses the reaction iminosuccinate + dihydroxyacetone phosphate = quinolinate + phosphate + 2 H2O + H(+). It functions in the pathway cofactor biosynthesis; NAD(+) biosynthesis; quinolinate from iminoaspartate: step 1/1. In terms of biological role, catalyzes the condensation of iminoaspartate with dihydroxyacetone phosphate to form quinolinate. This Trichormus variabilis (strain ATCC 29413 / PCC 7937) (Anabaena variabilis) protein is Quinolinate synthase.